The sequence spans 237 residues: Protein FEV (237 aa).

The ETS DNA-binding region spans I47–D127. The may mediate active transcriptional repression stretch occupies residues Q129–H237.

The protein belongs to the ETS family. In terms of tissue distribution, expressed in central serotonergic neurons.

The protein resides in the nucleus. Its function is as follows. Functions as a transcriptional regulator. May function as a transcriptional repressor. Functions in the differentiation and the maintenance of the central serotonergic neurons. May play a role in cell growth. This Mus musculus (Mouse) protein is Protein FEV (Fev).